The chain runs to 140 residues: Transcription antitermination protein NusB (140 aa).

The protein belongs to the NusB family.

Involved in transcription antitermination. Required for transcription of ribosomal RNA (rRNA) genes. Binds specifically to the boxA antiterminator sequence of the ribosomal RNA (rrn) operons. This is Transcription antitermination protein NusB from Streptococcus pneumoniae (strain 70585).